The following is a 400-amino-acid chain: uncharacterized protein (400 aa).

36–43 (GSINSGKT) lines the ATP pocket.

It belongs to the archaeal ATPase family.

This is an uncharacterized protein from Methanocaldococcus jannaschii (strain ATCC 43067 / DSM 2661 / JAL-1 / JCM 10045 / NBRC 100440) (Methanococcus jannaschii).